A 432-amino-acid chain; its full sequence is Amino-acid acetyltransferase (432 aa).

One can recognise an N-acetyltransferase domain in the interval E286 to S425.

It belongs to the acetyltransferase family. ArgA subfamily.

It is found in the cytoplasm. The enzyme catalyses L-glutamate + acetyl-CoA = N-acetyl-L-glutamate + CoA + H(+). Its pathway is amino-acid biosynthesis; L-arginine biosynthesis; N(2)-acetyl-L-ornithine from L-glutamate: step 1/4. The protein is Amino-acid acetyltransferase of Ectopseudomonas mendocina (strain ymp) (Pseudomonas mendocina).